The sequence spans 346 residues: MAEITAKLVKELREKSGAGVMDAKKALVEVDGDIEKAIELLREKGMAKAAKKADRIAAEGLTGIYVSGNVAAVVEVNAETDFVAKNAQFVELVNETAKVIAEGKPANNEEALALTMPSGETLEAAYVTATATIGEKISLRRFAVVEKTDAQHFGAYQHNGGRIGVVSVIEGGDEAIAKQISMHIAAMKPTVLSYSELDEQFVKDELAQLNHAIDQDNESRAMVNKPALPHLKYGSKAQLTDEVIAQAEEDIKAELAAEGKPEKIWDKIIPGKMDRFILDNTKVDQAYTLLAQVYIMDDSKTVEAYLESVNASVVEFVRFEVGEGIEKASNDFESEVAATMAAALNN.

The involved in Mg(2+) ion dislocation from EF-Tu stretch occupies residues 80–83 (TDFV).

The protein belongs to the EF-Ts family.

Its subcellular location is the cytoplasm. Associates with the EF-Tu.GDP complex and induces the exchange of GDP to GTP. It remains bound to the aminoacyl-tRNA.EF-Tu.GTP complex up to the GTP hydrolysis stage on the ribosome. This chain is Elongation factor Ts, found in Streptococcus thermophilus (strain CNRZ 1066).